Here is a 944-residue protein sequence, read N- to C-terminus: Bifunctional uridylyltransferase/uridylyl-removing enzyme (944 aa).

The uridylyltransferase stretch occupies residues 1 to 371 (MRDLDFTNIL…RFTHRNRKIA (371 aa)). Positions 372–727 (GSVEFVEDRG…VRTDSFHAIT (356 aa)) are uridylyl-removing. The HD domain maps to 488 to 604 (VDEHLIRTVD…TDFADRVQSL (117 aa)). ACT domains follow at residues 728–809 (EITV…EVIA) and 839–918 (VIEV…LRER). Residues 911-944 (EEDELRERMPSGIIAPAATARTPPASEKKAGSPI) form a disordered region. Residues 925–935 (APAATARTPPA) are compositionally biased toward low complexity.

The protein belongs to the GlnD family. Mg(2+) is required as a cofactor.

It catalyses the reaction [protein-PII]-L-tyrosine + UTP = [protein-PII]-uridylyl-L-tyrosine + diphosphate. It carries out the reaction [protein-PII]-uridylyl-L-tyrosine + H2O = [protein-PII]-L-tyrosine + UMP + H(+). Its activity is regulated as follows. Uridylyltransferase (UTase) activity is inhibited by glutamine, while glutamine likely activates uridylyl-removing (UR) activity. Its function is as follows. Modifies, by uridylylation and deuridylylation, the PII regulatory proteins GlnB and GlnK, in response to the nitrogen status of the cell that GlnD senses through the glutamine level. Under low glutamine levels, catalyzes the conversion of the PII proteins and UTP to PII-UMP and PPi, while under higher glutamine levels, GlnD likely hydrolyzes PII-UMP to PII and UMP (deuridylylation). Thus, controls uridylylation state and activity of the PII proteins, and plays an important role in the regulation of nitrogen metabolism. This is Bifunctional uridylyltransferase/uridylyl-removing enzyme from Rhizobium leguminosarum bv. viciae.